Consider the following 311-residue polypeptide: tRNA-cytidine(32) 2-sulfurtransferase (311 aa).

Positions 47 to 52 (SGGKDS) match the PP-loop motif motif. 3 residues coordinate [4Fe-4S] cluster: C122, C125, and C213.

Belongs to the TtcA family. In terms of assembly, homodimer. The cofactor is Mg(2+). [4Fe-4S] cluster serves as cofactor.

Its subcellular location is the cytoplasm. The catalysed reaction is cytidine(32) in tRNA + S-sulfanyl-L-cysteinyl-[cysteine desulfurase] + AH2 + ATP = 2-thiocytidine(32) in tRNA + L-cysteinyl-[cysteine desulfurase] + A + AMP + diphosphate + H(+). The protein operates within tRNA modification. In terms of biological role, catalyzes the ATP-dependent 2-thiolation of cytidine in position 32 of tRNA, to form 2-thiocytidine (s(2)C32). The sulfur atoms are provided by the cysteine/cysteine desulfurase (IscS) system. In Salmonella heidelberg (strain SL476), this protein is tRNA-cytidine(32) 2-sulfurtransferase.